A 658-amino-acid polypeptide reads, in one-letter code: Glycogen debranching enzyme (658 aa).

Residue D336 is the Nucleophile of the active site. The active-site Proton donor is E371. The interval 459–484 (EANGEENRDGTNSNYSDNHGKEGLGG) is disordered.

The protein belongs to the glycosyl hydrolase 13 family.

It catalyses the reaction Hydrolysis of (1-&gt;6)-alpha-D-glucosidic linkages to branches with degrees of polymerization of three or four glucose residues in limit dextrin.. It participates in glycan degradation; glycogen degradation. Functionally, removes maltotriose and maltotetraose chains that are attached by 1,6-alpha-linkage to the limit dextrin main chain, generating a debranched limit dextrin. The protein is Glycogen debranching enzyme of Salmonella enteritidis PT4 (strain P125109).